The following is a 212-amino-acid chain: Methylthioribulose-1-phosphate dehydratase (212 aa).

Residues histidine 99 and histidine 101 each contribute to the Zn(2+) site.

Belongs to the aldolase class II family. MtnB subfamily. As to quaternary structure, homotetramer. Zn(2+) is required as a cofactor.

The catalysed reaction is 5-(methylsulfanyl)-D-ribulose 1-phosphate = 5-methylsulfanyl-2,3-dioxopentyl phosphate + H2O. Its pathway is amino-acid biosynthesis; L-methionine biosynthesis via salvage pathway; L-methionine from S-methyl-5-thio-alpha-D-ribose 1-phosphate: step 2/6. Functionally, catalyzes the dehydration of methylthioribulose-1-phosphate (MTRu-1-P) into 2,3-diketo-5-methylthiopentyl-1-phosphate (DK-MTP-1-P). This Bacillus pumilus (strain SAFR-032) protein is Methylthioribulose-1-phosphate dehydratase.